We begin with the raw amino-acid sequence, 333 residues long: Heat shock transcription factor, X-linked member 4 (333 aa).

A disordered region spans residues 1 to 66 (MASQNTEQEY…QDNSPPEDRN (66 aa)). The segment covering 29 to 39 (GSSPDPNPDSS) has biased composition (low complexity). The segment covering 49 to 60 (AMSQDPGSQDNS) has biased composition (polar residues). The DNA-binding element occupies 79–182 (FRLSFPRKLW…PRLLENIQRK (104 aa)). Positions 227 to 275 (QGAPSVQGPSGTQSFRRSGMWSKKSATRHPLGNGPPQEPNGPSWEGTSG) are disordered. Polar residues predominate over residues 228–242 (GAPSVQGPSGTQSFR).

Belongs to the HSF family.

The protein resides in the nucleus. The sequence is that of Heat shock transcription factor, X-linked member 4 from Homo sapiens (Human).